A 116-amino-acid polypeptide reads, in one-letter code: Dolichyl-diphosphooligosaccharide--protein glycosyltransferase subunit DAD1 (116 aa).

Residues 1-32 (MAKSSATKDAQALFHSLRSAYAATPTNLKIID) lie on the Cytoplasmic side of the membrane. A helical membrane pass occupies residues 33–53 (LYVIFAISTALIQVVYMAIVG). The Lumenal portion of the chain corresponds to 54–56 (SFP). A helical transmembrane segment spans residues 57-77 (FNSFLSGVLSCIGTAVLAVCL). The Cytoplasmic portion of the chain corresponds to 78 to 95 (RIQVNKENKEFKDLPPER). The helical transmembrane segment at 96–116 (AFADFVLCNLVLHLVIMNFLG) threads the bilayer.

The protein belongs to the DAD/OST2 family. As to quaternary structure, component of the oligosaccharyltransferase (OST) complex.

Its subcellular location is the endoplasmic reticulum membrane. The protein operates within protein modification; protein glycosylation. Functionally, subunit of the oligosaccharyl transferase (OST) complex that catalyzes the initial transfer of a defined glycan (Glc(3)Man(9)GlcNAc(2) in eukaryotes) from the lipid carrier dolichol-pyrophosphate to an asparagine residue within an Asn-X-Ser/Thr consensus motif in nascent polypeptide chains, the first step in protein N-glycosylation. N-glycosylation occurs cotranslationally and the complex associates with the Sec61 complex at the channel-forming translocon complex that mediates protein translocation across the endoplasmic reticulum (ER). All subunits are required for a maximal enzyme activity. The chain is Dolichyl-diphosphooligosaccharide--protein glycosyltransferase subunit DAD1 (DAD1) from Solanum lycopersicum (Tomato).